The following is a 202-amino-acid chain: Protein TIFY 11g (202 aa).

The span at methionine 1–alanine 11 shows a compositional bias: gly residues. Positions methionine 1–alanine 31 are disordered. The segment covering methionine 12–glutamine 21 has biased composition (low complexity). One can recognise a Tify domain in the interval alanine 101–histidine 136. Positions proline 185–lysine 200 match the Jas motif. The short motif at alanine 187 to arginine 194 is the Nuclear localization signal element.

It belongs to the TIFY/JAZ family. Post-translationally, ubiquitinated. Targeted for degradation by the SCF(COI1) E3 ubiquitin ligase-proteasome pathway during jasmonate signaling.

The protein resides in the nucleus. Functionally, repressor of jasmonate responses. This Oryza sativa subsp. japonica (Rice) protein is Protein TIFY 11g.